The chain runs to 1066 residues: Ubiquitin conjugation factor E4 A (1066 aa).

The interval 33–57 (KEQLKQQSDELPASPDDSDNSVSES) is disordered. Position 386 is an N6-acetyllysine (Lys-386). One can recognise a U-box domain in the interval 987–1061 (DACDEFLDPI…QRWLAERKQQ (75 aa)).

The protein belongs to the ubiquitin conjugation factor E4 family.

The protein localises to the cytoplasm. It carries out the reaction S-ubiquitinyl-[E2 ubiquitin-conjugating enzyme]-L-cysteine + [acceptor protein]-L-lysine = [E2 ubiquitin-conjugating enzyme]-L-cysteine + N(6)-ubiquitinyl-[acceptor protein]-L-lysine.. Its pathway is protein modification; protein ubiquitination. Its function is as follows. Ubiquitin-protein ligase that probably functions as an E3 ligase in conjunction with specific E1 and E2 ligases. May also function as an E4 ligase mediating the assembly of polyubiquitin chains on substrates ubiquitinated by another E3 ubiquitin ligase. Mediates 'Lys-48'-linked polyubiquitination of substrates. This chain is Ubiquitin conjugation factor E4 A, found in Pongo abelii (Sumatran orangutan).